We begin with the raw amino-acid sequence, 356 residues long: S-adenosylmethionine:tRNA ribosyltransferase-isomerase (356 aa).

The protein belongs to the QueA family. In terms of assembly, monomer.

Its subcellular location is the cytoplasm. It carries out the reaction 7-aminomethyl-7-carbaguanosine(34) in tRNA + S-adenosyl-L-methionine = epoxyqueuosine(34) in tRNA + adenine + L-methionine + 2 H(+). Its pathway is tRNA modification; tRNA-queuosine biosynthesis. In terms of biological role, transfers and isomerizes the ribose moiety from AdoMet to the 7-aminomethyl group of 7-deazaguanine (preQ1-tRNA) to give epoxyqueuosine (oQ-tRNA). This Shigella boydii serotype 18 (strain CDC 3083-94 / BS512) protein is S-adenosylmethionine:tRNA ribosyltransferase-isomerase.